Here is a 374-residue protein sequence, read N- to C-terminus: Alcohol dehydrogenase class-3 (374 aa).

A2 is modified (N-acetylalanine). Zn(2+) contacts are provided by C45, H67, C97, C100, C103, C111, and C174. K233 is modified (N6-succinyllysine). S247 is modified (phosphoserine). K315 carries the post-translational modification N6-succinyllysine. Residues S324 and S351 each carry the phosphoserine modification.

It belongs to the zinc-containing alcohol dehydrogenase family. Class-III subfamily. As to quaternary structure, homodimer. Requires Zn(2+) as cofactor.

It is found in the cytoplasm. The catalysed reaction is a primary alcohol + NAD(+) = an aldehyde + NADH + H(+). It catalyses the reaction a secondary alcohol + NAD(+) = a ketone + NADH + H(+). It carries out the reaction S-(hydroxymethyl)glutathione + NADP(+) = S-formylglutathione + NADPH + H(+). The enzyme catalyses S-(hydroxymethyl)glutathione + NAD(+) = S-formylglutathione + NADH + H(+). The catalysed reaction is 20-oxo-(5Z,8Z,11Z,14Z)-eicosatetraenoate + NAD(+) + H2O = (5Z,8Z,11Z,14Z)-eicosatetraenedioate + NADH + 2 H(+). It catalyses the reaction 20-hydroxy-(5Z,8Z,11Z,14Z)-eicosatetraenoate + NAD(+) = 20-oxo-(5Z,8Z,11Z,14Z)-eicosatetraenoate + NADH + H(+). It carries out the reaction S-nitrosoglutathione + NADH + H(+) = S-(hydroxysulfenamide)glutathione + NAD(+). Its function is as follows. Catalyzes the oxidation of long-chain primary alcohols and the oxidation of S-(hydroxymethyl) glutathione. Also oxidizes long chain omega-hydroxy fatty acids, such as 20-HETE, producing both the intermediate aldehyde, 20-oxoarachidonate and the end product, a dicarboxylic acid, (5Z,8Z,11Z,14Z)-eicosatetraenedioate. Class-III ADH is remarkably ineffective in oxidizing ethanol. Required for clearance of cellular formaldehyde, a cytotoxic and carcinogenic metabolite that induces DNA damage. Also acts as a S-nitroso-glutathione reductase by catalyzing the NADH-dependent reduction of S-nitrosoglutathione, thereby regulating protein S-nitrosylation. The polypeptide is Alcohol dehydrogenase class-3 (Oryctolagus cuniculus (Rabbit)).